Reading from the N-terminus, the 105-residue chain is Protamine-2 (105 aa).

Residues 1-74 (MVRYRMRSPS…RRSCRRRRRH (74 aa)) form a disordered region. Phosphoserine occurs at positions 8, 10, and 33. A compositionally biased stretch (basic and acidic residues) spans 33-42 (SPERVEDYGR). Residues 43–74 (THRGHHRHRRCSRKRLHRIHKRRRSCRRRRRH) show a composition bias toward basic residues.

Belongs to the protamine P2 family. Interacts with TDRP. Post-translationally, proteolytic processing into mature chains is required for histone eviction during spermatogenesis. Transition proteins (TNP1 and TNP2) are required for processing. Testis.

The protein localises to the nucleus. The protein resides in the chromosome. In terms of biological role, protamines substitute for histones in the chromatin of sperm during the haploid phase of spermatogenesis. They compact sperm DNA into a highly condensed, stable and inactive complex. This is Protamine-2 (Prm2) from Rattus fuscipes (Bush rat).